A 410-amino-acid chain; its full sequence is 3-phosphoshikimate 1-carboxyvinyltransferase (410 aa).

Positions 21, 22, and 26 each coordinate 3-phosphoshikimate. Position 21 (Lys-21) interacts with phosphoenolpyruvate. Phosphoenolpyruvate-binding residues include Gly-69 and Arg-97. Ser-143, Ser-144, Gln-145, Ser-171, Asp-288, and Lys-315 together coordinate 3-phosphoshikimate. A phosphoenolpyruvate-binding site is contributed by Gln-145. Catalysis depends on Asp-288, which acts as the Proton acceptor. Positions 319, 364, and 389 each coordinate phosphoenolpyruvate.

The protein belongs to the EPSP synthase family. In terms of assembly, monomer.

The protein resides in the cytoplasm. The catalysed reaction is 3-phosphoshikimate + phosphoenolpyruvate = 5-O-(1-carboxyvinyl)-3-phosphoshikimate + phosphate. It functions in the pathway metabolic intermediate biosynthesis; chorismate biosynthesis; chorismate from D-erythrose 4-phosphate and phosphoenolpyruvate: step 6/7. In terms of biological role, catalyzes the transfer of the enolpyruvyl moiety of phosphoenolpyruvate (PEP) to the 5-hydroxyl of shikimate-3-phosphate (S3P) to produce enolpyruvyl shikimate-3-phosphate and inorganic phosphate. This chain is 3-phosphoshikimate 1-carboxyvinyltransferase, found in Bacteroides fragilis (strain ATCC 25285 / DSM 2151 / CCUG 4856 / JCM 11019 / LMG 10263 / NCTC 9343 / Onslow / VPI 2553 / EN-2).